Consider the following 29-residue polypeptide: GLPICGETCVGGTCNTPGCTCSWPVCTRN.

The segment at residues 1-29 (GLPICGETCVGGTCNTPGCTCSWPVCTRN) is a cross-link (cyclopeptide (Gly-Asn)). Disulfide bonds link Cys5–Cys19, Cys9–Cys21, and Cys14–Cys26.

Post-translationally, this is a cyclic peptide. In terms of tissue distribution, expressed in roots and runners but not in leaves, petals and petioles (at protein level).

In terms of biological role, probably participates in a plant defense mechanism. This chain is Cycloviolacin-O22, found in Viola odorata (Sweet violet).